Reading from the N-terminus, the 76-residue chain is Acyl carrier protein (76 aa).

The Carrier domain maps to 2 to 76 (SSIFDKVKAI…SAVEYIKENQ (75 aa)). Residue S36 is modified to O-(pantetheine 4'-phosphoryl)serine.

The protein belongs to the acyl carrier protein (ACP) family. 4'-phosphopantetheine is transferred from CoA to a specific serine of apo-ACP by AcpS. This modification is essential for activity because fatty acids are bound in thioester linkage to the sulfhydryl of the prosthetic group.

It is found in the cytoplasm. It participates in lipid metabolism; fatty acid biosynthesis. In terms of biological role, carrier of the growing fatty acid chain in fatty acid biosynthesis. This chain is Acyl carrier protein, found in Heliobacterium modesticaldum (strain ATCC 51547 / Ice1).